A 458-amino-acid polypeptide reads, in one-letter code: Cysteine protease ATG4C (458 aa).

Position 1 is an N-acetylmethionine (Met1). The Nucleophile role is filled by Cys111. Residues Asp345 and His347 contribute to the active site. Ser451 is subject to Phosphoserine. The residue at position 452 (Thr452) is a Phosphothreonine.

It belongs to the peptidase C54 family.

It is found in the cytoplasm. The catalysed reaction is [protein]-C-terminal L-amino acid-glycyl-phosphatidylethanolamide + H2O = [protein]-C-terminal L-amino acid-glycine + a 1,2-diacyl-sn-glycero-3-phosphoethanolamine. Inhibited by N-ethylmaleimide. Functionally, cysteine protease that plays a key role in autophagy by mediating both proteolytic activation and delipidation of ATG8 family proteins. The protease activity is required for proteolytic activation of ATG8 family proteins: cleaves the C-terminal amino acid of ATG8 proteins MAP1LC3 and GABARAPL2, to reveal a C-terminal glycine. Exposure of the glycine at the C-terminus is essential for ATG8 proteins conjugation to phosphatidylethanolamine (PE) and insertion to membranes, which is necessary for autophagy. In addition to the protease activity, also mediates delipidation of ATG8 family proteins. Catalyzes delipidation of PE-conjugated forms of ATG8 proteins during macroautophagy. Compared to ATG4B, the major protein for proteolytic activation of ATG8 proteins, shows weaker ability to cleave the C-terminal amino acid of ATG8 proteins, while it displays stronger delipidation activity. In contrast to other members of the family, weakly or not involved in phagophore growth during mitophagy. The polypeptide is Cysteine protease ATG4C (Mus musculus (Mouse)).